The primary structure comprises 143 residues: Deoxyuridine 5'-triphosphate nucleotidohydrolase (143 aa).

Substrate-binding positions include 62–64, N75, 79–81, and K89; these read RSG and TID.

This sequence belongs to the dUTPase family. It depends on Mg(2+) as a cofactor.

It carries out the reaction dUTP + H2O = dUMP + diphosphate + H(+). Its pathway is pyrimidine metabolism; dUMP biosynthesis; dUMP from dCTP (dUTP route): step 2/2. Its function is as follows. This enzyme is involved in nucleotide metabolism: it produces dUMP, the immediate precursor of thymidine nucleotides and it decreases the intracellular concentration of dUTP so that uracil cannot be incorporated into DNA. This chain is Deoxyuridine 5'-triphosphate nucleotidohydrolase, found in Clostridium kluyveri (strain ATCC 8527 / DSM 555 / NBRC 12016 / NCIMB 10680 / K1).